We begin with the raw amino-acid sequence, 258 residues long: Tryptophan synthase alpha chain (258 aa).

Residues Glu-47 and Asp-58 each act as proton acceptor in the active site.

The protein belongs to the TrpA family. Tetramer of two alpha and two beta chains.

It carries out the reaction (1S,2R)-1-C-(indol-3-yl)glycerol 3-phosphate + L-serine = D-glyceraldehyde 3-phosphate + L-tryptophan + H2O. Its pathway is amino-acid biosynthesis; L-tryptophan biosynthesis; L-tryptophan from chorismate: step 5/5. Functionally, the alpha subunit is responsible for the aldol cleavage of indoleglycerol phosphate to indole and glyceraldehyde 3-phosphate. This Bacillus cereus (strain B4264) protein is Tryptophan synthase alpha chain.